Here is a 605-residue protein sequence, read N- to C-terminus: Capsid scaffolding protein (605 aa).

Catalysis depends on charge relay system residues His48, Ser116, and His139. The interval Ala235–Gly274 is disordered. An interaction with pAP region spans residues Gln281–Asp300. Disordered stretches follow at residues Asp403–Asp432 and Pro489–Ser588. The Nuclear localization signal motif lies at Arg410–Arg416. The segment covering Ala568–Pro579 has biased composition (polar residues). The tract at residues Lys585–Ala605 is interaction with major capsid protein.

Belongs to the herpesviridae capsid scaffolding protein family. As to quaternary structure, homomultimer. Interacts with major capsid protein. Exists in a monomer-dimer equilibrium with the dimer being the active species. Capsid scaffolding protein is cleaved by assemblin after formation of the spherical procapsid. As a result, the capsid obtains its mature, icosahedral shape. Cleavages occur at two or more sites: release (R-site) and maturation (M-site).

The protein resides in the host cytoplasm. It localises to the host nucleus. The catalysed reaction is Cleaves -Ala-|-Ser- and -Ala-|-Ala- bonds in the scaffold protein.. In terms of biological role, acts as a scaffold protein by binding major capsid protein in the cytoplasm, inducing the nuclear localization of both proteins. Multimerizes in the nucleus such as major capsid protein forms the icosahedral T=16 capsid. Autocatalytic cleavage releases the assembly protein, and subsequently abolishes interaction with major capsid protein. Cleavages products are evicted from the capsid before or during DNA packaging. Its function is as follows. Protease that plays an essential role in virion assembly within the nucleus. Catalyzes the cleavage of the assembly protein after formation of the spherical procapsid. By that cleavage, the capsid matures and gains its icosahedral shape. The cleavage sites seem to include -Ala-Ser-, -Ala-Ala-, as well as Ala-Thr bonds. Assemblin and cleavages products are evicted from the capsid before or during DNA packaging. Plays a major role in capsid assembly. Acts as a scaffold protein by binding major capsid protein. Multimerizes in the nucleus such as major capsid protein forms the icosahedral T=16 capsid. Cleaved by assemblin after capsid completion. The cleavages products are evicted from the capsid before or during DNA packaging. The sequence is that of Capsid scaffolding protein from Homo sapiens (Human).